The following is a 510-amino-acid chain: D-alanine--D-alanyl carrier protein ligase (510 aa).

157–158 (TS) serves as a coordination point for ATP. D202 serves as a coordination point for D-alanine. 297 to 302 (NTYGPT) contacts ATP. V306 contacts D-alanine. Residues D389 and K498 each coordinate ATP. K498 is a binding site for D-alanine.

The protein belongs to the ATP-dependent AMP-binding enzyme family. DltA subfamily.

The protein resides in the cytoplasm. It carries out the reaction holo-[D-alanyl-carrier protein] + D-alanine + ATP = D-alanyl-[D-alanyl-carrier protein] + AMP + diphosphate. The protein operates within cell wall biogenesis; lipoteichoic acid biosynthesis. Catalyzes the first step in the D-alanylation of lipoteichoic acid (LTA), the activation of D-alanine and its transfer onto the D-alanyl carrier protein (Dcp) DltC. In an ATP-dependent two-step reaction, forms a high energy D-alanyl-AMP intermediate, followed by transfer of the D-alanyl residue as a thiol ester to the phosphopantheinyl prosthetic group of the Dcp. D-alanylation of LTA plays an important role in modulating the properties of the cell wall in Gram-positive bacteria, influencing the net charge of the cell wall. The chain is D-alanine--D-alanyl carrier protein ligase from Listeria monocytogenes serotype 4b (strain CLIP80459).